Reading from the N-terminus, the 850-residue chain is Transforming growth factor beta receptor type 3 (850 aa).

Positions 1–22 are cleaved as a signal peptide; sequence MAVTSHHMVPVFVLMSACLATA. The Extracellular segment spans residues 23–785; sequence GPEPSTRCEL…QIFHGLDTLT (763 aa). C54 and C199 form a disulfide bridge. 2 N-linked (GlcNAc...) asparagine glycosylation sites follow: N143 and N491. The 275-residue stretch at 454–728 folds into the ZP domain; sequence KCDNEKMVVA…PKCVTPDDAC (275 aa). Residues 528 to 557 are disordered; it reads SPGDSSGWPDGYEDLESGDNGFPGDTDEGE. S533 and S544 each carry an O-linked (Xyl...) (glycosaminoglycan) serine glycan. N-linked (GlcNAc...) asparagine glycosylation is found at N570, N589, and N696. Cystine bridges form between C638-C704, C659-C728, and C709-C721. The interval 735 to 749 is interaction with TGF-beta ligand; the sequence is MIWTMMQNKKTFTKP. A helical membrane pass occupies residues 786-808; sequence VMGIAFAAFVIGALLTGALWYIY. Residues 809-850 lie on the Cytoplasmic side of the membrane; it reads SHTGETARRQQVPTSPPASENSSAAHSIGSTQSTPCSSSSTA. Residues 817-833 are compositionally biased toward polar residues; that stretch reads RQQVPTSPPASENSSAA. The disordered stretch occupies residues 817-850; that stretch reads RQQVPTSPPASENSSAAHSIGSTQSTPCSSSSTA. A compositionally biased stretch (low complexity) spans 835–850; the sequence is SIGSTQSTPCSSSSTA. T839 bears the Phosphothreonine mark.

In terms of assembly, forms homodimers and homooligomers. Interacts with DYNLT4. Interacts with integrin ITGA5:ITGB1; this interaction promotes the internalization and trafficking of ITGA5:ITGB1 into endocytic vesicles. Interacts with TGFB1, BMP2, BMP5, BMP7 or GDF5 and inhibin A via the ligand binding domains. Interacts with ALK3/BMPR1A; this interaction results in the cell surface retention of BMPR1A. Interacts with ALK6/BMPR1B; this interaction enhances BMPR1B-mediated stimulation of the BMP signaling pathway. Interacts with the scaffolding protein beta-arrestin2/ARRB2; this interaction mediates internalization of TGFBR3 and thus regulates migration, actin cytoskeleton and activation of CDC42. Post-translationally, extensively modified by glycosaminoglycan groups (GAG). Phosphorylated in the cytoplasmic domain by the type II receptor TGFBR2 at THR-839 to mediate recruitment of ARRB2 and subsequent internalization of TGFBR2 and TGFBR3.

Its subcellular location is the cell membrane. The protein resides in the secreted. It is found in the extracellular space. It localises to the extracellular matrix. Its function is as follows. Cell surface receptor that regulates diverse cellular processes including cell proliferation, differentiation, migration, and apoptosis. Initiates BMP, inhibin, and TGF-beta signaling pathways by interacting with different ligands including TGFB1, BMP2, BMP5, BMP7 or GDF5. Alternatively, acts as a cell surface coreceptor for BMP ligands, serving to enhance ligand binding by differentially regulating BMPR1A/ALK3 and BMPR1B/ALK6 receptor trafficking. Promotes epithelial cell adhesion, focal adhesion formation and integrin signaling during epithelial cell spreading on fibronectin. By interacting with the scaffolding protein beta-arrestin2/ARRB2, regulates migration or actin cytoskeleton and promotes the activation of CDC42 as well as the inhibition of NF-kappa-B. In gonadotrope cells, acts as an inhibin A coreceptor and regulates follicle-stimulating hormone (FSH) levels and female fertility. Plays a role in the inhibition of directed and random cell migration in epithelial cells by altering the actin cytoskeletal organization. Participates in epithelial-mesenchymal transformation (EMT) upon binding to BMP2 or TGFB2, by activating the PAR6/SMURF1/RHOA pathway. The polypeptide is Transforming growth factor beta receptor type 3 (Tgfbr3) (Mus musculus (Mouse)).